We begin with the raw amino-acid sequence, 141 residues long: Large ribosomal subunit protein uL16 (141 aa).

Over residues 1–21 (MLMPKRTKFRKQMKGRNRGKS) the composition is skewed to basic residues. The disordered stretch occupies residues 1-22 (MLMPKRTKFRKQMKGRNRGKSF).

It belongs to the universal ribosomal protein uL16 family. As to quaternary structure, part of the 50S ribosomal subunit.

Its function is as follows. Binds 23S rRNA and is also seen to make contacts with the A and possibly P site tRNAs. The chain is Large ribosomal subunit protein uL16 from Wolinella succinogenes (strain ATCC 29543 / DSM 1740 / CCUG 13145 / JCM 31913 / LMG 7466 / NCTC 11488 / FDC 602W) (Vibrio succinogenes).